A 148-amino-acid polypeptide reads, in one-letter code: Large ribosomal subunit protein uL15 (148 aa).

The segment at 1–61 (MKINDLKPAP…GGQMPLQRRV (61 aa)) is disordered.

This sequence belongs to the universal ribosomal protein uL15 family. In terms of assembly, part of the 50S ribosomal subunit.

Its function is as follows. Binds to the 23S rRNA. The protein is Large ribosomal subunit protein uL15 of Thermodesulfovibrio yellowstonii (strain ATCC 51303 / DSM 11347 / YP87).